The sequence spans 22 residues: SNKKDYQKEIVDKHNALRRSVK.

Over residues 1-15 (SNKKDYQKEIVDKHN) the composition is skewed to basic and acidic residues. The tract at residues 1-22 (SNKKDYQKEIVDKHNALRRSVK) is disordered.

It belongs to the CRISP family. In terms of processing, contains 8 disulfide bonds. Expressed by the venom gland.

It is found in the secreted. The polypeptide is Cysteine-rich venom protein notescatin (Notechis scutatus scutatus (Mainland tiger snake)).